We begin with the raw amino-acid sequence, 388 residues long: MRVRRGLLRLPRRSLLAALFFFSLSSSLLYFVYVAPGIVNTYLFMMQAQGILIRDNMRTIGAQVYEQVVRSAYAKRNSSVNDSDYPLDLNHSETFLQTTTFLPEDFTYFANHTCPERLPSMKGPIDINMSEIGMDTIHELFSKDPAIKLGGHWKPSDCVPRWKVAILIPFRNRHEHLPVLLRHLIPMLQRQRLQFAFYVVEQVGTQPFNRAMLFNVGFQEAMKDLDWDCLVFHDVDHIPENDRNYYGCGQMPRHFATKLDKYMYLLPYNEFFGGVSGLTVEQFRKINGFPNAFWGWGGEDDDLWNRVQNAGYSVSRPEGDTGKYKSIPYHHRGEVQFLGRYALLRKSKERQGLDGLNNLNYFANITYDALYKNITVNLTPELAQVTEY.

The Cytoplasmic portion of the chain corresponds to 1–14 (MRVRRGLLRLPRRS). A helical; Signal-anchor for type II membrane protein transmembrane segment spans residues 15–35 (LLAALFFFSLSSSLLYFVYVA). The Lumenal portion of the chain corresponds to 36–388 (PGIVNTYLFM…TPELAQVTEY (353 aa)). N-linked (GlcNAc...) asparagine glycans are attached at residues asparagine 77, asparagine 81, asparagine 90, asparagine 111, and asparagine 128. A disulfide bridge connects residues cysteine 114 and cysteine 158. Residues 169-173 (PFRNR), 208-210 (FNR), 235-236 (VD), tyrosine 264, and tryptophan 296 each bind UDP-alpha-D-galactose. Cysteine 229 and cysteine 248 are joined by a disulfide. Residue aspartate 236 participates in Mn(2+) binding. 298-301 (GEDD) contacts N-acetyl-D-glucosamine. 329-330 (YH) contributes to the UDP-alpha-D-galactose binding site. Residue arginine 340 coordinates N-acetyl-D-glucosamine. N-linked (GlcNAc...) asparagine glycosylation is found at asparagine 364 and asparagine 373.

The protein belongs to the glycosyltransferase 7 family. (Microbial infection) Interacts with porcine reproductive and respiratory syndrome virus GP5. Mn(2+) is required as a cofactor.

It localises to the golgi apparatus. The protein localises to the golgi stack membrane. The catalysed reaction is a beta-D-glucosyl-(1&lt;-&gt;1')-N-acylsphing-4-enine + UDP-alpha-D-galactose = a beta-D-Gal-(1-&gt;4)-beta-D-Glc-(1&lt;-&gt;1)-Cer(d18:1(4E)) + UDP + H(+). Its pathway is protein modification; protein glycosylation. It participates in sphingolipid metabolism. In terms of biological role, catalyzes the synthesis of lactosylceramide (LacCer) via the transfer of galactose from UDP-galactose to glucosylceramide (GlcCer). LacCer is the starting point in the biosynthesis of all gangliosides (membrane-bound glycosphingolipids) which play pivotal roles in the CNS including neuronal maturation and axonal and myelin formation. Plays a role in the glycosylation of BMPR1A and regulation of its protein stability. Essential for extraembryonic development during early embryogenesis. (Microbial infection) May play a role in the glycosylation of porcine reproductive and respiratory syndrome virus GP5 protein and may be involved in the regulation of viral proliferation. The sequence is that of Beta-1,4-galactosyltransferase 5 (B4GALT5) from Sus scrofa (Pig).